Consider the following 701-residue polypeptide: Probable cytosolic oligopeptidase A (701 aa).

Alanine 2 carries the post-translational modification N-acetylalanine. Residues 148–194 (IALEDDKREEFNKIEQELEKLSHKFSENVLDATKKFEKLITDKKEIE) are a coiled coil. Histidine 483 provides a ligand contact to Zn(2+). Glutamate 484 is a catalytic residue. Zn(2+) contacts are provided by histidine 487 and glutamate 513. 615-621 (HIFAGGY) is a substrate binding site.

It belongs to the peptidase M3 family. Zn(2+) serves as cofactor.

The protein localises to the cytoplasm. Its subcellular location is the cytosol. It catalyses the reaction Hydrolysis of oligopeptides, with broad specificity. Gly or Ala commonly occur as P1 or P1' residues, but more distant residues are also important, as is shown by the fact that Z-Gly-Pro-Gly-|-Gly-Pro-Ala is cleaved, but not Z-(Gly)(5).. With respect to regulation, inhibited by salicylic acid. Functionally, oligopeptidase that may be involved in the degradation of proteasome-generated peptides. Binds salicylic acid. This Arabidopsis thaliana (Mouse-ear cress) protein is Probable cytosolic oligopeptidase A.